The sequence spans 304 residues: Probable endonuclease 4 (304 aa).

Zn(2+)-binding residues include His-75, His-115, Glu-151, Asp-185, His-188, His-221, Asp-234, His-236, and Glu-266.

It belongs to the AP endonuclease 2 family. Zn(2+) serves as cofactor.

The enzyme catalyses Endonucleolytic cleavage to 5'-phosphooligonucleotide end-products.. In terms of biological role, endonuclease IV plays a role in DNA repair. It cleaves phosphodiester bonds at apurinic or apyrimidinic (AP) sites, generating a 3'-hydroxyl group and a 5'-terminal sugar phosphate. The polypeptide is Probable endonuclease 4 (Ureaplasma urealyticum serovar 10 (strain ATCC 33699 / Western)).